The primary structure comprises 1203 residues: DNA-directed RNA polymerase subunit beta (1203 aa).

The segment covering 1174–1195 (AAQEAKAAFEAEEAEKATKAEA) has biased composition (basic and acidic residues). The interval 1174 to 1203 (AAQEAKAAFEAEEAEKATKAEATEEAAEQE) is disordered.

The protein belongs to the RNA polymerase beta chain family. As to quaternary structure, the RNAP catalytic core consists of 2 alpha, 1 beta, 1 beta' and 1 omega subunit. When a sigma factor is associated with the core the holoenzyme is formed, which can initiate transcription.

It catalyses the reaction RNA(n) + a ribonucleoside 5'-triphosphate = RNA(n+1) + diphosphate. Its function is as follows. DNA-dependent RNA polymerase catalyzes the transcription of DNA into RNA using the four ribonucleoside triphosphates as substrates. This Streptococcus pneumoniae serotype 19F (strain G54) protein is DNA-directed RNA polymerase subunit beta.